The primary structure comprises 485 residues: Lysophospholipid acyltransferase 5 (485 aa).

Ala2 carries the post-translational modification N-acetylalanine. Transmembrane regions (helical) follow at residues 35–55, 82–102, 108–128, 139–158, 176–196, 232–252, and 283–303; these read ASEQ…FALF, YNFG…FLIL, TITA…AGYY, WTMP…MDYY, IWGV…GAFL, LALG…ITED, and VTCW…FNGL. Catalysis depends on residues Asn336 and His372. The next 3 membrane-spanning stretches (helical) occupy residues 362–382, 420–440, and 448–468; these read GLSL…LVCF, LAQQ…FCLF, and VYKS…FILP. The short motif at 482–485 is the Di-lysine motif element; that stretch reads KKME.

Belongs to the membrane-bound acyltransferase family.

It localises to the endoplasmic reticulum membrane. It carries out the reaction a 1-acyl-sn-glycero-3-phosphocholine + an acyl-CoA = a 1,2-diacyl-sn-glycero-3-phosphocholine + CoA. It catalyses the reaction a 1-acyl-sn-glycero-3-phosphoethanolamine + an acyl-CoA = a 1,2-diacyl-sn-glycero-3-phosphoethanolamine + CoA. The enzyme catalyses a 1-acyl-sn-glycero-3-phospho-L-serine + an acyl-CoA = a 1,2-diacyl-sn-glycero-3-phospho-L-serine + CoA. The catalysed reaction is (9Z,12Z)-octadecadienoyl-CoA + a 1-acyl-sn-glycero-3-phosphocholine = 1-acyl-2-(9Z,12Z)-octadecadienoyl-sn-glycero-3-phosphocholine + CoA. It carries out the reaction (5Z,8Z,11Z,14Z)-eicosatetraenoyl-CoA + a 1-acyl-sn-glycero-3-phosphocholine = 1-acyl-2-(5Z,8Z,11Z,14Z-eicosatetraenoyl)-sn-glycero-3-phosphocholine + CoA. It catalyses the reaction dodecanoyl-CoA + 1-hexadecanoyl-sn-glycero-3-phosphocholine = 1-hexadecanoyl-2-dodecanoyl-sn-glycero-3-phosphocholine + CoA. The enzyme catalyses octadecanoyl-CoA + 1-hexadecanoyl-sn-glycero-3-phosphocholine = 1-hexadecanoyl-2-octadecanoyl-sn-glycero-3-phosphocholine + CoA. The catalysed reaction is 1-dodecanoyl-sn-glycero-3-phosphocholine + hexadecanoyl-CoA = 1-dodecanoyl-2-hexadecanoyl-sn-glycero-3-phosphocholine + CoA. It carries out the reaction 1-tetradecanoyl-sn-glycero-3-phosphocholine + hexadecanoyl-CoA = 1-tetradecanoyl-2-hexadecanoyl-sn-glycero-3-phosphocholine + CoA. It catalyses the reaction 1-hexadecanoyl-sn-glycero-3-phosphocholine + hexadecanoyl-CoA = 1,2-dihexadecanoyl-sn-glycero-3-phosphocholine + CoA. The enzyme catalyses 1-octadecanoyl-sn-glycero-3-phosphocholine + hexadecanoyl-CoA = 1-octadecanoyl-2-hexadecanoyl-sn-glycero-3-phosphocholine + CoA. The catalysed reaction is 1-(9Z-octadecenoyl)-sn-glycero-3-phosphocholine + hexadecanoyl-CoA = 1-(9Z-octadecenoyl)-2-hexadecanoyl-sn-glycero-3-phosphocholine + CoA. It carries out the reaction (9Z)-hexadecenoyl-CoA + 1-hexadecanoyl-sn-glycero-3-phosphocholine = 1-hexadecanoyl-2-(9Z-hexadecenoyl)-sn-glycero-3-phosphocholine + CoA. It catalyses the reaction 1-hexadecanoyl-sn-glycero-3-phosphocholine + (9Z)-octadecenoyl-CoA = 1-hexadecanoyl-2-(9Z-octadecenoyl)-sn-glycero-3-phosphocholine + CoA. The enzyme catalyses (9Z,12Z)-octadecadienoyl-CoA + 1-hexadecanoyl-sn-glycero-3-phosphocholine = 1-hexadecanoyl-2-(9Z,12Z-octadecadienoyl)-sn-glycero-3-phosphocholine + CoA. The catalysed reaction is 1-dodecanoyl-sn-glycero-3-phosphocholine + (5Z,8Z,11Z,14Z)-eicosatetraenoyl-CoA = 1-dodecanoyl-2-(5Z,8Z,11Z,14Z)-eicosatetraenoyl-sn-glycero-3-phosphocholine + CoA. It carries out the reaction (5Z,8Z,11Z,14Z)-eicosatetraenoyl-CoA + 1-hexadecanoyl-sn-glycero-3-phosphocholine = 1-hexadecanoyl-2-(5Z,8Z,11Z,14Z-eicosatetraenoyl)-sn-glycero-3-phosphocholine + CoA. It catalyses the reaction 1-octadecanoyl-sn-glycero-3-phosphocholine + (5Z,8Z,11Z,14Z)-eicosatetraenoyl-CoA = 1-octadecanoyl-2-(5Z,8Z,11Z,14Z-eicosatetraenoyl)-sn-glycero-3-phosphocholine + CoA. The enzyme catalyses 1-eicosanoyl-sn-glycero-3-phosphocholine + (5Z,8Z,11Z,14Z)-eicosatetraenoyl-CoA = 1-eicosanoyl-2-(5Z,8Z,11Z,14Z)-eicosatetraenoyl-sn-glycero-3-phosphocholine + CoA. The catalysed reaction is 1-(9Z-octadecenoyl)-sn-glycero-3-phosphocholine + (9Z)-octadecenoyl-CoA = 1,2-di-(9Z-octadecenoyl)-sn-glycero-3-phosphocholine + CoA. It carries out the reaction 1-(9Z-octadecenoyl)-sn-glycero-3-phosphocholine + (9Z,12Z)-octadecadienoyl-CoA = 1-(9Z)-octadecenoyl-2-(9Z,12Z)-octadecadienoyl-sn-glycero-3-phosphocholine + CoA. It catalyses the reaction 1-(9Z-octadecenoyl)-sn-glycero-3-phosphocholine + (5Z,8Z,11Z,14Z)-eicosatetraenoyl-CoA = 1-(9Z)-octadecenoyl-2-(5Z,8Z,11Z,14Z)-icosatetraenoyl-sn-glycero-3-phosphocholine + CoA. The enzyme catalyses a 1-acyl-sn-glycero-3-phosphoethanolamine + (9Z,12Z)-octadecadienoyl-CoA = 1-acyl-2-(9Z,12Z)-octadecadienoyl-sn-glycero-3-phosphoethanolamine + CoA. The catalysed reaction is 1-(9Z-octadecenoyl)-sn-glycero-3-phosphoethanolamine + (9Z,12Z)-octadecadienoyl-CoA = 1-(9Z)-octadecenoyl-2-(9Z,12Z)-octadecadienoyl-sn-glycero-3-phosphoethanolamine + CoA. It carries out the reaction 1-(10Z-heptadecenoyl)-sn-glycero-3-phosphoethanolamine + (9Z,12Z)-octadecadienoyl-CoA = 1-(10Z-heptadecenoyl)-2-(9Z,12Z-octadecadienoyl)-sn-glycero-3-phosphoethanolamine + CoA. It catalyses the reaction a 1-acyl-sn-glycero-3-phosphoethanolamine + (5Z,8Z,11Z,14Z)-eicosatetraenoyl-CoA = 1-acyl-2-(5Z,8Z,11Z,14Z)-eicosatetraenoyl-sn-glycero-3-phosphoethanolamine + CoA. The enzyme catalyses 1-hexadecanoyl-sn-glycero-3-phosphoethanolamine + (5Z,8Z,11Z,14Z)-eicosatetraenoyl-CoA = 1-hexadecanoyl-2-(5Z,8Z,11Z,14Z-eicosatetraenoyl)-sn-glycero-3-phosphoethanolamine + CoA. The catalysed reaction is 1-(9Z-octadecenoyl)-sn-glycero-3-phosphoethanolamine + (5Z,8Z,11Z,14Z)-eicosatetraenoyl-CoA = 1-(9Z)-octadecenoyl-2-(5Z,8Z,11Z,14Z)-eicosatetraenoyl-sn-glycero-3-phosphoethanolamine + CoA. It carries out the reaction 1-(10Z-heptadecenoyl)-sn-glycero-3-phosphoethanolamine + (5Z,8Z,11Z,14Z)-eicosatetraenoyl-CoA = 1-(10Z-heptadecenoyl)-2-(5Z,8Z,11Z,14Z-eicosatetraenoyl)-sn-glycero-3-phosphoethanolamine + CoA. It catalyses the reaction a 1-O-(1Z-alkenyl)-sn-glycero-3-phosphoethanolamine + (5Z,8Z,11Z,14Z)-eicosatetraenoyl-CoA = 1-O-(1Z)-alkenyl-2-(5Z,8Z,11Z,14Z)-eicosatetraenoyl-sn-glycero-3-phosphoethanolamine + CoA. The enzyme catalyses a 1-acyl-sn-glycero-3-phospho-L-serine + (9Z,12Z)-octadecadienoyl-CoA = 1-acyl-2-(9Z,12Z-octadecadienoyl)-sn-glycero-3-phospho-L-serine + CoA. The catalysed reaction is a 1-acyl-sn-glycero-3-phospho-L-serine + (5Z,8Z,11Z,14Z)-eicosatetraenoyl-CoA = 1-acyl-2-(5Z,8Z,11Z,14Z-eicosatetraenoyl)-sn-glycero-3-phospho-L-serine + CoA. It carries out the reaction 1-hexadecanoyl-sn-glycero-3-phospho-L-serine + (9Z)-octadecenoyl-CoA = 1-hexadecanoyl-2-(9Z-octadecenoyl)-sn-glycero-3-phospho-L-serine + CoA. It catalyses the reaction 1-(9Z-octadecenoyl)-sn-glycero-3-phospho-L-serine + (9Z)-octadecenoyl-CoA = 1,2-di-(9Z)-octadecenoyl-sn-glycero-3-phospho-L-serine + CoA. The enzyme catalyses 1-hexadecanoyl-sn-glycero-3-phospho-L-serine + (9Z,12Z)-octadecadienoyl-CoA = 1-hexadecanoyl-2-(9Z,12Z-octadecadienoyl)-sn-glycero-3-phospho-L-serine + CoA. The catalysed reaction is 1-(9Z-octadecenoyl)-sn-glycero-3-phospho-L-serine + (9Z,12Z)-octadecadienoyl-CoA = 1-(9Z-octadecenoyl)-2-(9Z,12Z-octadienoyl)-sn-glycero-3-phospho-L-serine + CoA. It carries out the reaction 1-hexadecanoyl-sn-glycero-3-phospho-L-serine + (5Z,8Z,11Z,14Z)-eicosatetraenoyl-CoA = 1-hexadecanoyl-2-(5Z,8Z,11Z,14Z-eicosatetraenoyl)-sn-glycero-3-phospho-L-serine + CoA. It catalyses the reaction 1-(9Z-octadecenoyl)-sn-glycero-3-phospho-L-serine + (5Z,8Z,11Z,14Z)-eicosatetraenoyl-CoA = 1-(9Z-octadecenoyl)-2-(5Z,8Z,11Z,14Z-eicosatetraenoyl)-sn-glycero-3-phospho-L-serine + CoA. It participates in lipid metabolism; phospholipid metabolism. Its function is as follows. Lysophospholipid O-acyltransferase (LPLAT) that catalyzes the reacylation step of the phospholipid remodeling process also known as the Lands cycle. Catalyzes transfer of the fatty acyl chain from fatty acyl-CoA to 1-acyl lysophospholipid to form various classes of phospholipids. Converts 1-acyl lysophosphatidylcholine (LPC) into phosphatidylcholine (PC) (LPCAT activity), 1-acyl lysophosphatidylserine (LPS) into phosphatidylserine (PS) (LPSAT activity) and 1-acyl lysophosphatidylethanolamine (LPE) into phosphatidylethanolamine (PE) (LPEAT activity). Favors polyunsaturated fatty acyl-CoAs as acyl donors compared to saturated fatty acyl-CoAs. Has higher activity for LPC acyl acceptors compared to LPEs and LPSs. Can also transfer the fatty acyl chain from fatty acyl-CoA to 1-O-alkyl lysophospholipid or 1-O-alkenyl lysophospholipid with lower efficiency. Acts as a major LPC O-acyltransferase in liver and intestine. As a component of the liver X receptor/NR1H3 or NR1H2 signaling pathway, mainly catalyzes the incorporation of arachidonate into PCs of endoplasmic reticulum (ER) membranes, increasing membrane dynamics and enabling triacylglycerols transfer to nascent very low-density lipoprotein (VLDL) particles. Promotes processing of sterol regulatory protein SREBF1 in hepatocytes, likely by facilitating the translocation of SREBF1-SCAP complex from ER to the Golgi apparatus. Participates in mechanisms by which the liver X receptor/NR1H3 or NR1H2 signaling pathway counteracts lipid-induced ER stress response and inflammation. Down-regulates hepatic inflammation by limiting arachidonic acid availability for synthesis of inflammatory eicosanoids, such as prostaglandins. In enterocytes, acts as a component of a gut-brain feedback loop that coordinates dietary lipid absorption and food intake. Regulates the abundance of PCs containing linoleate and arachidonate in enterocyte membranes, enabling passive diffusion of fatty acids and cholesterol across the membrane for efficient chylomicron assembly. In the intestinal crypt, acts as a component of dietary-responsive phospholipid-cholesterol axis, regulating the biosynthesis of cholesterol and its mitogenic effects on intestinal stem cells. This is Lysophospholipid acyltransferase 5 (LPCAT3) from Bos taurus (Bovine).